Here is a 176-residue protein sequence, read N- to C-terminus: I-Kappa-B like protein G1 (176 aa).

ANK repeat units lie at residues 56 to 88 (EGRQCTHIAAEYDVSNAVMKIELLVMLGADINS), 93 to 123 (FGNTLLHIAAGTENYQLAEWLCKKPGVELGA), and 127 to 156 (LYKTAYHIAYERQNARMMEILRVNGAVCDD).

Belongs to the polydnaviridae I-Kappa-B-like protein family.

In terms of biological role, suppresses the host immune response through NF-kappa-B inactivation. Possesses ankyrin repeat domains required for NF-kappa-B binding but lacks the regulatory regions required for dissociation from NF-kappa-B and degradation. Therefore, prevents host NF-kappa-B release and subsequent activation. This chain is I-Kappa-B like protein G1 (G3), found in Microplitis demolitor (Parasitoid wasp).